Reading from the N-terminus, the 711-residue chain is MGWLPLLLLLTQCLGVPGQRSPLNDFQVLRGTELQHLLHAVVPGPWQEDVADAEECAGRCGPLMDCRAFHYNVSSHGCQLLPWTQHSPHTRLRRSGRCDLFQKKDYVRTCIMNNGVGYRGTMATTVGGLPCQAWSHKFPNDHKYTPTLRNGLEENFCRNPDGDPGGPWCYTTDPAVRFQSCGIKSCREAACVWCNGEEYRGAVDRTESGRECQRWDLQHPHQHPFEPGKFLDQGLDDNYCRNPDGSERPWCYTTDPQIEREFCDLPRCGSEAQPRQEATTVSCFRGKGEGYRGTANTTTAGVPCQRWDAQIPHQHRFTPEKYACKDLRENFCRNPDGSEAPWCFTLRPGMRAAFCYQIRRCTDDVRPQDCYHGAGEQYRGTVSKTRKGVQCQRWSAETPHKPQFTFTSEPHAQLEENFCRNPDGDSHGPWCYTMDPRTPFDYCALRRCADDQPPSILDPPDQVQFEKCGKRVDRLDQRRSKLRVVGGHPGNSPWTVSLRNRQGQHFCGGSLVKEQWILTARQCFSSCHMPLTGYEVWLGTLFQNPQHGEPSLQRVPVAKMVCGPSGSQLVLLKLERSVTLNQRVALICLPPEWYVVPPGTKCEIAGWGETKGTGNDTVLNVALLNVISNQECNIKHRGRVRESEMCTEGLLAPVGACEGDYGGPLACFTHNCWVLEGIIIPNRVCARSRWPAVFTRVSVFVDWIHKVMRLG.

Positions 1–18 (MGWLPLLLLLTQCLGVPG) are cleaved as a signal peptide. A PAN domain is found at 21–105 (SPLNDFQVLR…GRCDLFQKKD (85 aa)). 20 cysteine pairs are disulfide-bonded: Cys-56–Cys-78, Cys-60–Cys-66, Cys-110–Cys-186, Cys-131–Cys-169, Cys-157–Cys-181, Cys-191–Cys-268, Cys-194–Cys-324, Cys-212–Cys-251, Cys-240–Cys-263, Cys-283–Cys-361, Cys-304–Cys-343, Cys-332–Cys-355, Cys-370–Cys-448, Cys-391–Cys-431, Cys-419–Cys-443, Cys-468–Cys-588, Cys-507–Cys-523, Cys-602–Cys-667, Cys-632–Cys-646, and Cys-657–Cys-685. The N-linked (GlcNAc...) asparagine glycan is linked to Asn-72. Kringle domains follow at residues 110–186 (CIMN…IKSC), 191–268 (CVWC…LPRC), 283–361 (CFRG…IRRC), and 370–448 (CYHG…LRRC). The N-linked (GlcNAc...) asparagine glycan is linked to Asn-296. The region spanning 484–709 (VVGGHPGNSP…FVDWIHKVMR (226 aa)) is the Peptidase S1 domain. N-linked (GlcNAc...) asparagine glycosylation is present at Asn-615.

This sequence belongs to the peptidase S1 family. Plasminogen subfamily. Dimer of an alpha chain and a beta chain linked by a disulfide bond. Interacts (via beta chain) with MST1R (via SEMA domain). Post-translationally, cleaved after Arg-483, probably by HPN/Hepsin, to yield the active form consisting of two disulfide-linked chains.

It is found in the secreted. This chain is Hepatocyte growth factor-like protein (MST1), found in Homo sapiens (Human).